We begin with the raw amino-acid sequence, 291 residues long: uncharacterized protein (291 aa).

One can recognise a DAGKc domain in the interval 68–205 (PVAVSASFLW…VIQLWARPRG (138 aa)).

This is an uncharacterized protein from Mycobacterium tuberculosis (strain CDC 1551 / Oshkosh).